We begin with the raw amino-acid sequence, 232 residues long: Ornithine carbamoyltransferase (232 aa).

Carbamoyl phosphate-binding positions include Gln-15, Arg-39, and His-66 to Gln-69. L-ornithine is bound by residues Asn-99, Asp-163, and Ser-167–Met-168. Carbamoyl phosphate is bound by residues His-204–Pro-207 and Thr-232.

It belongs to the aspartate/ornithine carbamoyltransferase superfamily. OTCase family.

It is found in the cytoplasm. The enzyme catalyses carbamoyl phosphate + L-ornithine = L-citrulline + phosphate + H(+). It functions in the pathway amino-acid biosynthesis; L-arginine biosynthesis; L-arginine from L-ornithine and carbamoyl phosphate: step 1/3. The sequence is that of Ornithine carbamoyltransferase (argF) from Neisseria animalis.